The following is a 312-amino-acid chain: 4-hydroxy-3-methylbut-2-enyl diphosphate reductase (312 aa).

[4Fe-4S] cluster is bound at residue cysteine 15. (2E)-4-hydroxy-3-methylbut-2-enyl diphosphate-binding residues include histidine 44 and histidine 77. Residues histidine 44 and histidine 77 each contribute to the dimethylallyl diphosphate site. 2 residues coordinate isopentenyl diphosphate: histidine 44 and histidine 77. Cysteine 99 contributes to the [4Fe-4S] cluster binding site. Residue histidine 127 participates in (2E)-4-hydroxy-3-methylbut-2-enyl diphosphate binding. Histidine 127 is a dimethylallyl diphosphate binding site. Residue histidine 127 participates in isopentenyl diphosphate binding. The active-site Proton donor is glutamate 129. Threonine 167 is a binding site for (2E)-4-hydroxy-3-methylbut-2-enyl diphosphate. A [4Fe-4S] cluster-binding site is contributed by cysteine 197. (2E)-4-hydroxy-3-methylbut-2-enyl diphosphate is bound by residues serine 225, serine 226, asparagine 227, and serine 269. Serine 225, serine 226, asparagine 227, and serine 269 together coordinate dimethylallyl diphosphate. Positions 225, 226, 227, and 269 each coordinate isopentenyl diphosphate.

Belongs to the IspH family. [4Fe-4S] cluster is required as a cofactor.

The catalysed reaction is isopentenyl diphosphate + 2 oxidized [2Fe-2S]-[ferredoxin] + H2O = (2E)-4-hydroxy-3-methylbut-2-enyl diphosphate + 2 reduced [2Fe-2S]-[ferredoxin] + 2 H(+). The enzyme catalyses dimethylallyl diphosphate + 2 oxidized [2Fe-2S]-[ferredoxin] + H2O = (2E)-4-hydroxy-3-methylbut-2-enyl diphosphate + 2 reduced [2Fe-2S]-[ferredoxin] + 2 H(+). It functions in the pathway isoprenoid biosynthesis; dimethylallyl diphosphate biosynthesis; dimethylallyl diphosphate from (2E)-4-hydroxy-3-methylbutenyl diphosphate: step 1/1. The protein operates within isoprenoid biosynthesis; isopentenyl diphosphate biosynthesis via DXP pathway; isopentenyl diphosphate from 1-deoxy-D-xylulose 5-phosphate: step 6/6. In terms of biological role, catalyzes the conversion of 1-hydroxy-2-methyl-2-(E)-butenyl 4-diphosphate (HMBPP) into a mixture of isopentenyl diphosphate (IPP) and dimethylallyl diphosphate (DMAPP). Acts in the terminal step of the DOXP/MEP pathway for isoprenoid precursor biosynthesis. This chain is 4-hydroxy-3-methylbut-2-enyl diphosphate reductase, found in Azoarcus sp. (strain BH72).